We begin with the raw amino-acid sequence, 305 residues long: Mas-related G-protein coupled receptor member A8 (305 aa).

Residues 1–17 lie on the Extracellular side of the membrane; that stretch reads MDKTILGSIDIETLIRH. Residues 18–38 traverse the membrane as a helical segment; the sequence is LMIIIFGLVGLTGNAIVFWLL. Over 39 to 46 the chain is Cytoplasmic; the sequence is GFHLHRNA. A helical transmembrane segment spans residues 47–67; sequence FLVYILNLALADFFYLLCHII. The Extracellular portion of the chain corresponds to 68 to 85; that stretch reads NSIMFLLKVPSPNIILDH. A helical transmembrane segment spans residues 86-106; sequence CFYTIMIVLYITGLSMLSAIS. At 107-129 the chain is on the cytoplasmic side; the sequence is TERCLSVLCPIWYRCHRPEHTST. The chain crosses the membrane as a helical span at residues 130-150; the sequence is AMCAVIWVMSLLISILNGYFC. 2 N-linked (GlcNAc...) asparagine glycosylation sites follow: N151 and N159. Topologically, residues 151–172 are extracellular; sequence NFSSPKYVNNSVCQASDIFIRT. The chain crosses the membrane as a helical span at residues 173–193; sequence YPIFLFVLLCLSTLALLARLF. The Cytoplasmic portion of the chain corresponds to 194 to 207; it reads SGAGKRKFTRLFVT. A helical transmembrane segment spans residues 208 to 228; that stretch reads IMLAILVFLLCGLPLGFFWFL. The Extracellular portion of the chain corresponds to 229–243; that stretch reads SPWIEDRFIVLDYRL. Residues 244–264 traverse the membrane as a helical segment; it reads FFASVVLTVVNSCANPIIYFF. The Cytoplasmic portion of the chain corresponds to 265–305; the sequence is VGSFRHRLKQQTLKMFLQRALQDTPETPENMVEMSRSKAEP.

It belongs to the G-protein coupled receptor 1 family. Mas subfamily. As to expression, expressed in a subset of sensory neurons that includes nociceptors. Expressed in the subclass of non-peptidergic sensory neurons that are IB4(+) and VR1(-).

It is found in the cell membrane. In terms of biological role, orphan receptor. May be a receptor for RFamide-family neuropeptides such as NPFF and NPAF, which are analgesic in vivo. May regulate nociceptor function and/or development, including the sensation or modulation of pain. The chain is Mas-related G-protein coupled receptor member A8 (Mrgpra8) from Mus musculus (Mouse).